A 182-amino-acid chain; its full sequence is UPF0200 protein Mboo_1593 (182 aa).

Position 8–15 (8–15) interacts with ATP; it reads GLPASGKG.

Belongs to the UPF0200 family.

The polypeptide is UPF0200 protein Mboo_1593 (Methanoregula boonei (strain DSM 21154 / JCM 14090 / 6A8)).